The sequence spans 446 residues: Indoleacetamide hydrolase (446 aa).

Catalysis depends on charge relay system residues lysine 71 and serine 146. Serine 170 serves as the catalytic Acyl-ester intermediate.

This sequence belongs to the amidase family.

Its pathway is plant hormone metabolism; auxin biosynthesis. Hydrolyzes indole-3-acetamide (IAM) into indole-3-acetic acid (IAA). This Pseudomonas syringae pv. syringae protein is Indoleacetamide hydrolase (iaaH).